The sequence spans 254 residues: MSAAGGIVYVIVGGNRGIGLSLVKELSNKEGVTVFASARGPGSASELKDWSKTHSNVHIIKLDVTSLRSAKDAAMQVEKVVKCIDVLWVNSGISKSFQPVLKTSDELWMSHYQTNVLGPIHVYQAFYHLLKEGKLKNIVFTSSMAACMGGVRPNTYSAYGQSKAALNYTMKEISFELEKDGFVVVSIHPGVVNTDMFVNAMQKLASKYPEMVESIKSNAISPEQSASSMLKIVDNLKTEDNGMFYNLDGTKLPF.

I18, S37, D63, N90, Y159, K163, V192, and T194 together coordinate NADP(+). Y159 (proton donor) is an active-site residue. K163 acts as the Lowers pKa of active site Tyr in catalysis.

It belongs to the short-chain dehydrogenases/reductases (SDR) family.

It is found in the cytoplasm. The protein localises to the nucleus. This is an uncharacterized protein from Schizosaccharomyces pombe (strain 972 / ATCC 24843) (Fission yeast).